Consider the following 296-residue polypeptide: 4-hydroxy-tetrahydrodipicolinate synthase (296 aa).

Thr-49 is a pyruvate binding site. Tyr-137 functions as the Proton donor/acceptor in the catalytic mechanism. The active-site Schiff-base intermediate with substrate is Lys-166. Ile-208 is a pyruvate binding site.

This sequence belongs to the DapA family. As to quaternary structure, homotetramer; dimer of dimers.

The protein resides in the cytoplasm. It carries out the reaction L-aspartate 4-semialdehyde + pyruvate = (2S,4S)-4-hydroxy-2,3,4,5-tetrahydrodipicolinate + H2O + H(+). It participates in amino-acid biosynthesis; L-lysine biosynthesis via DAP pathway; (S)-tetrahydrodipicolinate from L-aspartate: step 3/4. Its function is as follows. Catalyzes the condensation of (S)-aspartate-beta-semialdehyde [(S)-ASA] and pyruvate to 4-hydroxy-tetrahydrodipicolinate (HTPA). The sequence is that of 4-hydroxy-tetrahydrodipicolinate synthase from Chlorobium luteolum (strain DSM 273 / BCRC 81028 / 2530) (Pelodictyon luteolum).